Here is a 128-residue protein sequence, read N- to C-terminus: Small ribosomal subunit protein uS12 (128 aa).

Aspartate 89 is subject to 3-methylthioaspartic acid. The disordered stretch occupies residues 101 to 128 (SLDTSGVADRRQGRSKYGAKRPKGAAAK). A compositionally biased stretch (basic residues) spans 113–128 (GRSKYGAKRPKGAAAK).

This sequence belongs to the universal ribosomal protein uS12 family. As to quaternary structure, part of the 30S ribosomal subunit. Contacts proteins S8 and S17. May interact with IF1 in the 30S initiation complex.

Functionally, with S4 and S5 plays an important role in translational accuracy. Interacts with and stabilizes bases of the 16S rRNA that are involved in tRNA selection in the A site and with the mRNA backbone. Located at the interface of the 30S and 50S subunits, it traverses the body of the 30S subunit contacting proteins on the other side and probably holding the rRNA structure together. The combined cluster of proteins S8, S12 and S17 appears to hold together the shoulder and platform of the 30S subunit. This is Small ribosomal subunit protein uS12 from Prosthecochloris aestuarii (strain DSM 271 / SK 413).